The chain runs to 416 residues: Tryptophan synthase beta chain (416 aa).

K98 is modified (N6-(pyridoxal phosphate)lysine).

This sequence belongs to the TrpB family. In terms of assembly, tetramer of two alpha and two beta chains. Pyridoxal 5'-phosphate serves as cofactor.

The catalysed reaction is (1S,2R)-1-C-(indol-3-yl)glycerol 3-phosphate + L-serine = D-glyceraldehyde 3-phosphate + L-tryptophan + H2O. It participates in amino-acid biosynthesis; L-tryptophan biosynthesis; L-tryptophan from chorismate: step 5/5. Its function is as follows. The beta subunit is responsible for the synthesis of L-tryptophan from indole and L-serine. In Ruegeria pomeroyi (strain ATCC 700808 / DSM 15171 / DSS-3) (Silicibacter pomeroyi), this protein is Tryptophan synthase beta chain.